The following is a 167-amino-acid chain: Peptide deformylase (167 aa).

Fe cation-binding residues include Cys-91 and His-133. Glu-134 is a catalytic residue. Position 137 (His-137) interacts with Fe cation.

Belongs to the polypeptide deformylase family. Fe(2+) is required as a cofactor.

It catalyses the reaction N-terminal N-formyl-L-methionyl-[peptide] + H2O = N-terminal L-methionyl-[peptide] + formate. Functionally, removes the formyl group from the N-terminal Met of newly synthesized proteins. Requires at least a dipeptide for an efficient rate of reaction. N-terminal L-methionine is a prerequisite for activity but the enzyme has broad specificity at other positions. The protein is Peptide deformylase of Tolumonas auensis (strain DSM 9187 / NBRC 110442 / TA 4).